A 182-amino-acid chain; its full sequence is Ribosome-recycling factor (182 aa).

This sequence belongs to the RRF family.

It localises to the cytoplasm. In terms of biological role, responsible for the release of ribosomes from messenger RNA at the termination of protein biosynthesis. May increase the efficiency of translation by recycling ribosomes from one round of translation to another. This is Ribosome-recycling factor from Mycoplasma capricolum subsp. capricolum (strain California kid / ATCC 27343 / NCTC 10154).